Consider the following 163-residue polypeptide: K88 minor fimbrial subunit FaeF (163 aa).

Positions Met1–Ala22 are cleaved as a signal peptide.

The protein resides in the fimbrium. Its function is as follows. K88 minor fimbrial subunit, plays an essential role in the biogenesis of the K88 fimbriae. required at some step in the initiation and/or elongation of the K88 fimbriae. This Escherichia coli protein is K88 minor fimbrial subunit FaeF (faeF).